The primary structure comprises 193 residues: Large ribosomal subunit protein uL18 (193 aa).

The protein belongs to the universal ribosomal protein uL18 family. In terms of assembly, part of the 50S ribosomal subunit. Contacts the 5S and 23S rRNAs.

Its function is as follows. This is one of the proteins that bind and probably mediate the attachment of the 5S RNA into the large ribosomal subunit, where it forms part of the central protuberance. The protein is Large ribosomal subunit protein uL18 of Methanococcus maripaludis (strain C6 / ATCC BAA-1332).